A 245-amino-acid polypeptide reads, in one-letter code: 5-oxoprolinase subunit A (245 aa).

Belongs to the LamB/PxpA family. As to quaternary structure, forms a complex composed of PxpA, PxpB and PxpC.

It carries out the reaction 5-oxo-L-proline + ATP + 2 H2O = L-glutamate + ADP + phosphate + H(+). Its function is as follows. Catalyzes the cleavage of 5-oxoproline to form L-glutamate coupled to the hydrolysis of ATP to ADP and inorganic phosphate. The sequence is that of 5-oxoprolinase subunit A from Neisseria meningitidis serogroup C (strain 053442).